The primary structure comprises 122 residues: Large ribosomal subunit protein bL12 (122 aa).

This sequence belongs to the bacterial ribosomal protein bL12 family. In terms of assembly, homodimer. Part of the ribosomal stalk of the 50S ribosomal subunit. Forms a multimeric L10(L12)X complex, where L10 forms an elongated spine to which 2 to 4 L12 dimers bind in a sequential fashion. Binds GTP-bound translation factors.

Functionally, forms part of the ribosomal stalk which helps the ribosome interact with GTP-bound translation factors. Is thus essential for accurate translation. This chain is Large ribosomal subunit protein bL12, found in Pseudomonas entomophila (strain L48).